Reading from the N-terminus, the 77-residue chain is Translation initiation factor IF-1, chloroplastic (77 aa).

Residues 1–71 (MKEQKLIHEG…TRGRIIYRLR (71 aa)) form the S1-like domain.

It belongs to the IF-1 family. As to quaternary structure, component of the 30S ribosomal translation pre-initiation complex which assembles on the 30S ribosome in the order IF-2 and IF-3, IF-1 and N-formylmethionyl-tRNA(fMet); mRNA recruitment can occur at any time during PIC assembly.

The protein localises to the plastid. Its subcellular location is the chloroplast. One of the essential components for the initiation of protein synthesis. Stabilizes the binding of IF-2 and IF-3 on the 30S subunit to which N-formylmethionyl-tRNA(fMet) subsequently binds. Helps modulate mRNA selection, yielding the 30S pre-initiation complex (PIC). Upon addition of the 50S ribosomal subunit IF-1, IF-2 and IF-3 are released leaving the mature 70S translation initiation complex. The protein is Translation initiation factor IF-1, chloroplastic of Cabomba caroliniana (Carolina fanwort).